Here is a 409-residue protein sequence, read N- to C-terminus: Serine/threonine transporter SstT (409 aa).

8 consecutive transmembrane segments (helical) span residues 24–44 (LALGIVIGSVSPQLGLAAGLF), 48–68 (FVGALKAVAPVLVFILVAATI), 82–102 (IIVLYLIGTFSAALTAVIAGM), 142–162 (AIANANYIGILAWALVLGAAL), 194–214 (LGIFGLVSSTIAETGFGALAG), 218–238 (LLAVLLGCMAFIALAVNPAIV), 292–312 (IPLGATINMAGAAITITVLAM), and 319–339 (GITVDFATALLLSLVATVSAC).

The protein belongs to the dicarboxylate/amino acid:cation symporter (DAACS) (TC 2.A.23) family.

The protein resides in the cell inner membrane. It carries out the reaction L-serine(in) + Na(+)(in) = L-serine(out) + Na(+)(out). It catalyses the reaction L-threonine(in) + Na(+)(in) = L-threonine(out) + Na(+)(out). In terms of biological role, involved in the import of serine and threonine into the cell, with the concomitant import of sodium (symport system). The protein is Serine/threonine transporter SstT of Neisseria meningitidis serogroup B (strain ATCC BAA-335 / MC58).